Consider the following 377-residue polypeptide: LIM/homeobox protein Lhx9 (377 aa).

LIM zinc-binding domains follow at residues 50 to 111 (ALCA…RFSV) and 112 to 174 (QRCA…LVQG). Disordered stretches follow at residues 228-249 (NENDADHLDRDQQPYPPSQKTK), 309-346 (RQENGGVDKADGTSLPPPSSDSGALTPPSTATTLTDLT), and 358-377 (SSLDSHDSGSPPQTTLTNLF). Positions 248-307 (TKXMRTSFKHHQLRTMKSYFAINHNPDAKDLKQLAQKTGLTKRVLQVWFQNARAKFRRNV) form a DNA-binding region, homeobox. The segment covering 333 to 346 (LTPPSTATTLTDLT) has biased composition (low complexity). The span at 365-377 (SGSPPQTTLTNLF) shows a compositional bias: polar residues.

It is found in the nucleus. Its function is as follows. May be involved in gonadal development. The polypeptide is LIM/homeobox protein Lhx9 (lhx9) (Psalidodon fasciatus (Banded astyanax)).